The primary structure comprises 642 residues: Threonine--tRNA ligase (642 aa).

Positions 1–61 (MPIITLPDGS…TEDAELQLIT (61 aa)) constitute a TGS domain. The interval 242 to 535 (DHRKLGKSLD…LVEHYEGKFP (294 aa)) is catalytic. Residues Cys333, His384, and His512 each coordinate Zn(2+).

This sequence belongs to the class-II aminoacyl-tRNA synthetase family. As to quaternary structure, homodimer. Zn(2+) serves as cofactor.

Its subcellular location is the cytoplasm. It carries out the reaction tRNA(Thr) + L-threonine + ATP = L-threonyl-tRNA(Thr) + AMP + diphosphate + H(+). In terms of biological role, catalyzes the attachment of threonine to tRNA(Thr) in a two-step reaction: L-threonine is first activated by ATP to form Thr-AMP and then transferred to the acceptor end of tRNA(Thr). Also edits incorrectly charged L-seryl-tRNA(Thr). The polypeptide is Threonine--tRNA ligase (Hydrogenovibrio crunogenus (strain DSM 25203 / XCL-2) (Thiomicrospira crunogena)).